A 284-amino-acid chain; its full sequence is Proteasome subunit beta (284 aa).

Residues 1–56 (MSPMESSSTRFPGQALPAAYLTPGSSSFTDFLRVAAPELMPGSRPVPDGAVEAPHG) constitute a propeptide, removed in mature form; by autocatalysis. Residue threonine 57 is the Nucleophile of the active site.

Belongs to the peptidase T1B family. The 20S proteasome core is composed of 14 alpha and 14 beta subunits that assemble into four stacked heptameric rings, resulting in a barrel-shaped structure. The two inner rings, each composed of seven catalytic beta subunits, are sandwiched by two outer rings, each composed of seven alpha subunits. The catalytic chamber with the active sites is on the inside of the barrel. Has a gated structure, the ends of the cylinder being occluded by the N-termini of the alpha-subunits. Is capped by the proteasome-associated ATPase, ARC.

It localises to the cytoplasm. The catalysed reaction is Cleavage of peptide bonds with very broad specificity.. It functions in the pathway protein degradation; proteasomal Pup-dependent pathway. Its activity is regulated as follows. The formation of the proteasomal ATPase ARC-20S proteasome complex, likely via the docking of the C-termini of ARC into the intersubunit pockets in the alpha-rings, may trigger opening of the gate for substrate entry. Interconversion between the open-gate and close-gate conformations leads to a dynamic regulation of the 20S proteasome proteolysis activity. In terms of biological role, component of the proteasome core, a large protease complex with broad specificity involved in protein degradation. The sequence is that of Proteasome subunit beta from Saccharopolyspora erythraea (strain ATCC 11635 / DSM 40517 / JCM 4748 / NBRC 13426 / NCIMB 8594 / NRRL 2338).